We begin with the raw amino-acid sequence, 555 residues long: MDIKRTILWVIFSMSLVLLYDNWQRSQGHASMFFPSTTQQAASAPAASGAAAQGDVPKANVAPGAAGTAAPAAPQAAAQPTGEKVVVTTDTVRAEIDTAGGIVSRLELLKEHEKDGKPVVLFERDNVRTYMARSGLIGGDLPNHTTVFTAAPGPRTLDGAEQLEVALTAEKNGVKLVKTYVFRKGSYVVDTKFAVTNAGAAPVSPTLYLELARDGSKVEQSQFYSTFTGPAVYTDADKYHKIDFEDIAKGKATVPAAANNGWVAMVQHYFASAWIPQTGKEHSFYVQQIDPHLYRVGVQQPLGELAPGATVTTDARLFAGPQEEHMLEKIAPGLELVKDYGWLTILAKPLFWLLEKLHGFLGNWGWSIIALTVLIKLVFFPLSAASYKSMGKMKDLQPRMTSIRERYKNDPQKMNQEMMGLYKTEKVNPLGGCLPIVIQIPVFIALYWVLLSSVEMRGAPWLGWIHDLSVPDPFYILPIVMAVSMFVQTKLNPTPPDPVQAKVMMIMPLVFSVMFFFFPAGLVLYWVVNNILSIAQQWQINRMLGKGKAAVVAKS.

Residues 7 to 24 (ILWVIFSMSLVLLYDNWQ) traverse the membrane as a helical segment. The tract at residues 62–81 (APGAAGTAAPAAPQAAAQPT) is disordered. 5 helical membrane-spanning segments follow: residues 334 to 354 (LELVKDYGWLTILAKPLFWLL), 360 to 380 (FLGNWGWSIIALTVLIKLVFF), 430 to 450 (LGGCLPIVIQIPVFIALYWVL), 468 to 488 (LSVPDPFYILPIVMAVSMFVQ), and 503 to 523 (VMMIMPLVFSVMFFFFPAGLV).

Belongs to the OXA1/ALB3/YidC family. Type 1 subfamily. Interacts with the Sec translocase complex via SecD. Specifically interacts with transmembrane segments of nascent integral membrane proteins during membrane integration.

Its subcellular location is the cell inner membrane. In terms of biological role, required for the insertion and/or proper folding and/or complex formation of integral membrane proteins into the membrane. Involved in integration of membrane proteins that insert both dependently and independently of the Sec translocase complex, as well as at least some lipoproteins. Aids folding of multispanning membrane proteins. The chain is Membrane protein insertase YidC from Cupriavidus necator (strain ATCC 17699 / DSM 428 / KCTC 22496 / NCIMB 10442 / H16 / Stanier 337) (Ralstonia eutropha).